We begin with the raw amino-acid sequence, 753 residues long: Rsm22-cox11 tandem protein 1, mitochondrial (753 aa).

Residues 1 to 39 (MPILTCRYKILFLYNLRNCFTFQNQRCLIPYGTTTTIRW) constitute a mitochondrion transit peptide. Positions 323, 329, 342, and 430 each coordinate [4Fe-4S] cluster. The helical transmembrane segment at 571 to 591 (IYYLVAISIFALGLTYAAVPL) threads the bilayer. Residues 592 to 753 (YRLFCSKTGY…TNGNLLTKLN (162 aa)) are Mitochondrial intermembrane-facing.

The protein in the N-terminal section; belongs to the methyltransferase superfamily. Rsm22 family. In the C-terminal section; belongs to the COX11/CtaG family. In terms of assembly, associates with the mitochondrial ribosome (mitoribosome). Only transiently interacts with the mitoribosome. Specific enzymatic cleavages in vivo by mitochondrial processing peptidase (MPP) yield mature proteins including rsm22-1 and cox11-1.

Its subcellular location is the mitochondrion. The protein localises to the mitochondrion inner membrane. Its function is as follows. Mitochondrial ribosome (mitoribosome) assembly factor. Binds at the interface of the head and body domains of the mitochondrial small ribosomal subunit (mt-SSU), occluding the mRNA channel and preventing compaction of the head domain towards the body. Probable inactive methyltransferase: retains the characteristic folding and ability to bind S-adenosyl-L-methionine, but it probably lost its methyltransferase activity. Exerts its effect at some terminal stage of cytochrome c oxidase synthesis, probably by being involved in the insertion of the copper B into subunit I. The chain is Rsm22-cox11 tandem protein 1, mitochondrial (cox1101) from Schizosaccharomyces pombe (strain 972 / ATCC 24843) (Fission yeast).